A 222-amino-acid chain; its full sequence is Eukaryotic translation initiation factor 4E-2 (222 aa).

The span at 1 to 20 (MVDEVEKPVSLEESKTNTRE) shows a compositional bias: basic and acidic residues. The segment at 1 to 35 (MVDEVEKPVSLEESKTNTREVEEEGEIVGESDDTM) is disordered. A compositionally biased stretch (acidic residues) spans 21 to 33 (VEEEGEIVGESDD). 2 EIF4G-binding regions span residues 47-50 (HALE) and 57-93 (FDNP…NNIH). Residues 65-70 (KQAAWG), K97, and 115-116 (WE) each bind mRNA. A disulfide bridge links C120 with C158. Positions 141 to 150 (YTLLAMIGEQ) are EIF4G-binding. MRNA contacts are provided by residues 165 to 170 (RVRQEK) and 210 to 214 (KKLDR).

Belongs to the eukaryotic initiation factor 4E family. In terms of assembly, EIF4F is a multi-subunit complex, the composition of which varies with external and internal environmental conditions. It is composed of at least EIF4A, EIF4E and EIF4G. EIF4E is also known to interact with other partners. In higher plants two isoforms of EIF4F have been identified, named isoform EIF4F and isoform EIF(iso)4F. Isoform EIF4F has subunits p220 and p26, whereas isoform EIF(iso)4F has subunits p82 and p28. (Microbial infection) Interacts with potyvirus viral genome-linked protein (VPg); this interaction is possible in susceptible hosts but impaired in resistant plants. According to the redox status, the Cys-120-Cys-158 disulfide bridge may have a role in regulating protein function by affecting its ability to bind capped mRNA. Strongly expressed in susceptible plants but not in resistant ones.

It is found in the nucleus. It localises to the cytoplasm. Component of the protein complex eIF4F, which is involved in the recognition of the mRNA cap, ATP-dependent unwinding of 5'-terminal secondary structure and recruitment of mRNA to the ribosome. Recognizes and binds the 7-methylguanosine-containing mRNA cap during an early step in the initiation of protein synthesis and facilitates ribosome binding by inducing the unwinding of the mRNAs secondary structures. Key component of recessive resistance to potyviruses. In terms of biological role, (Microbial infection) Susceptibility host factor required for viral infection (e.g. potato virus Y (PVY) and pepper mottle virus (PepMoV)) by recruiting viral RNAs to the host ribosomal complex via an interaction with viral genome-linked protein (VPg). The polypeptide is Eukaryotic translation initiation factor 4E-2 (Nicotiana tabacum (Common tobacco)).